Reading from the N-terminus, the 205-residue chain is MDSIAKRPRTRLSPLKRKQQLMEIALEVFARRGIGRGGHADIAEIAQVSVATVFNYFPTREDLVDEVLNHVVRQFSNFLSDNIDLDIHARENIANITNAMIELVSQDCHWLKVWFEWSASTRDEVWPLFVTTNRTNQLLVQNMFIKAIERGEVCDQHEPEHLANLFHGICYSIFVQANRSKSEAELTNLVSAYLDMLCIYNREHH.

Residues 15–75 (LKRKQQLMEI…EVLNHVVRQF (61 aa)) enclose the HTH tetR-type domain. Residues 39-58 (HADIAEIAQVSVATVFNYFP) constitute a DNA-binding region (H-T-H motif).

Functionally, regulatory protein of bacterial bioluminescence. It probably binds the autoinducer molecule and potentiates the transcription of the bioluminescence operon. The polypeptide is HTH-type transcriptional regulator LuxR (luxR) (Vibrio harveyi (Beneckea harveyi)).